A 294-amino-acid polypeptide reads, in one-letter code: Cuticle collagen 144 (294 aa).

A signal peptide spans 1 to 30 (MEKILVTISTGAASFAVLAVLFTIPSLYNT). The segment covering 100-112 (TCPPGPPGPPGQP) has biased composition (pro residues). Disordered regions lie at residues 100 to 134 (TCPPGPPGPPGQPGQPGTPGAPGPKGEDNTSTYAP) and 148 to 278 (PQGP…GNDA). 2 triple-helical region regions span residues 102 to 127 (PPGPPGPPGQPGQPGTPGAPGPKGED) and 153 to 274 (GPEG…PGLP). Low complexity-rich tracts occupy residues 164 to 209 (AGPD…PGQD) and 219 to 265 (APGA…DGQP).

As to quaternary structure, collagen polypeptide chains are complexed within the cuticle by disulfide bonds and other types of covalent cross-links.

Its function is as follows. Nematode cuticles are composed largely of collagen-like proteins. The cuticle functions both as an exoskeleton and as a barrier to protect the worm from its environment. In Caenorhabditis briggsae, this protein is Cuticle collagen 144.